Consider the following 79-residue polypeptide: Translational regulator CsrA (79 aa).

This sequence belongs to the CsrA/RsmA family. As to quaternary structure, homodimer; the beta-strands of each monomer intercalate to form a hydrophobic core, while the alpha-helices form wings that extend away from the core.

It localises to the cytoplasm. A translational regulator that binds mRNA to regulate translation initiation and/or mRNA stability. Usually binds in the 5'-UTR at or near the Shine-Dalgarno sequence preventing ribosome-binding, thus repressing translation. Its main target seems to be the major flagellin gene, while its function is anatagonized by FliW. This is Translational regulator CsrA from Solidesulfovibrio magneticus (strain ATCC 700980 / DSM 13731 / RS-1) (Desulfovibrio magneticus).